The primary structure comprises 79 residues: Putative membrane protein insertion efficiency factor (79 aa).

This sequence belongs to the UPF0161 family.

Its subcellular location is the cell inner membrane. Its function is as follows. Could be involved in insertion of integral membrane proteins into the membrane. In Bacteroides thetaiotaomicron (strain ATCC 29148 / DSM 2079 / JCM 5827 / CCUG 10774 / NCTC 10582 / VPI-5482 / E50), this protein is Putative membrane protein insertion efficiency factor.